The primary structure comprises 402 residues: Propionate kinase (402 aa).

2 residues coordinate ATP: N11 and K18. Mg(2+) is bound at residue N11. R86 contributes to the substrate binding site. The active-site Proton donor/acceptor is D143. Residues H175, H203–G207, D278–R280, and G326–N330 contribute to the ATP site.

Belongs to the acetokinase family. TdcD subfamily. Homodimer. Mg(2+) is required as a cofactor.

It catalyses the reaction propanoate + ATP = propanoyl phosphate + ADP. Its pathway is amino-acid degradation; L-threonine degradation via propanoate pathway; propanoate from L-threonine: step 4/4. Functionally, catalyzes the conversion of propionyl phosphate and ADP to propionate and ATP. This Salmonella agona (strain SL483) protein is Propionate kinase.